Reading from the N-terminus, the 396-residue chain is Phosphoglycerate kinase (396 aa).

Residues 24–26, arginine 39, 62–65, arginine 120, and arginine 153 each bind substrate; these read DFN and HLGR. ATP-binding positions include lysine 203, glycine 294, glutamate 325, and 352–355; that span reads GGDS.

This sequence belongs to the phosphoglycerate kinase family. Monomer.

Its subcellular location is the cytoplasm. It catalyses the reaction (2R)-3-phosphoglycerate + ATP = (2R)-3-phospho-glyceroyl phosphate + ADP. It participates in carbohydrate degradation; glycolysis; pyruvate from D-glyceraldehyde 3-phosphate: step 2/5. The polypeptide is Phosphoglycerate kinase (Dictyoglomus turgidum (strain DSM 6724 / Z-1310)).